The sequence spans 400 residues: Cytohesin-3 (400 aa).

The stretch at 14–61 (EDLSLEEREELLDIRRRKKELIDDIERLKYEIAEVMTEIDNLTSVEES) forms a coiled coil. One can recognise an SEC7 domain in the interval 77–206 (FNMDPKKGIQ…IIMLNTSLHN (130 aa)). In terms of domain architecture, PH spans 264–381 (NPDREGWLLK…WMKSIKASIS (118 aa)). Residues 273 to 281 (KLGGGRVKT), R285, Y296, R306, and N355 each bind a 1,2-diacyl-sn-glycero-3-phospho-(1D-myo-inositol-3,4,5-trisphosphate). Positions 392–400 (RKRRIANKK) are C-terminal autoinhibitory region.

Interacts with TAMALIN. Interacts with ARF6. Interacts with FRMD4A. Interacts with FRMD4B. In terms of tissue distribution, almost absent from liver, thymus and peripheral blood lymphocytes.

It is found in the cytoplasm. The protein resides in the cytosol. It localises to the cell membrane. Its subcellular location is the cell junction. The protein localises to the adherens junction. It is found in the tight junction. Functionally, promotes guanine-nucleotide exchange on ARF1 and ARF6. Promotes the activation of ARF factors through replacement of GDP with GTP. Plays a role in the epithelial polarization. The protein is Cytohesin-3 of Homo sapiens (Human).